Here is a 421-residue protein sequence, read N- to C-terminus: Enolase (421 aa).

Gln162 is a binding site for (2R)-2-phosphoglycerate. Residue Glu204 is the Proton donor of the active site. 3 residues coordinate Mg(2+): Asp241, Glu284, and Asp311. (2R)-2-phosphoglycerate is bound by residues Lys336, Arg365, Ser366, and Lys387. Residue Lys336 is the Proton acceptor of the active site.

This sequence belongs to the enolase family. Requires Mg(2+) as cofactor.

The protein localises to the cytoplasm. Its subcellular location is the secreted. It localises to the cell surface. The enzyme catalyses (2R)-2-phosphoglycerate = phosphoenolpyruvate + H2O. The protein operates within carbohydrate degradation; glycolysis; pyruvate from D-glyceraldehyde 3-phosphate: step 4/5. In terms of biological role, catalyzes the reversible conversion of 2-phosphoglycerate (2-PG) into phosphoenolpyruvate (PEP). It is essential for the degradation of carbohydrates via glycolysis. The chain is Enolase from Nitratiruptor sp. (strain SB155-2).